The sequence spans 928 residues: DNA-binding protein RFX6 (928 aa).

Disordered stretches follow at residues 1-22 (MAKV…QVSP) and 53-102 (PGGA…AADL). Positions 92-101 (SHDSKTKAAD) are enriched in basic and acidic residues. Residues 124-199 (TLQWLEENYI…YHYYGIGIKE (76 aa)) constitute a DNA-binding region (RFX-type winged-helix).

It belongs to the RFX family. In terms of assembly, interacts with RFX3.

It is found in the nucleus. In terms of biological role, transcription factor required to direct islet cell differentiation during endocrine pancreas development. Specifically required for the differentiation of 4 of the 5 islet cell types and for the production of insulin. Not required for pancreatic PP (polypeptide-producing) cells differentiation. Acts downstream of NEUROG3 and regulates the transcription factors involved in beta-cell maturation and function, thereby restricting the expression of the beta-cell differentiation and specification genes, and thus the beta-cell fate choice. Activates transcription by forming a heterodimer with RFX3 and binding to the X-box in the promoter of target genes. Involved in glucose-stimulated insulin secretion by promoting insulin and L-type calcium channel gene transcription. This Ailuropoda melanoleuca (Giant panda) protein is DNA-binding protein RFX6 (RFX6).